The chain runs to 121 residues: Large ribosomal subunit protein bL12 (121 aa).

It belongs to the bacterial ribosomal protein bL12 family. Homodimer. Part of the ribosomal stalk of the 50S ribosomal subunit. Forms a multimeric L10(L12)X complex, where L10 forms an elongated spine to which 2 to 4 L12 dimers bind in a sequential fashion. Binds GTP-bound translation factors.

Functionally, forms part of the ribosomal stalk which helps the ribosome interact with GTP-bound translation factors. Is thus essential for accurate translation. The polypeptide is Large ribosomal subunit protein bL12 (Shewanella piezotolerans (strain WP3 / JCM 13877)).